Here is a 379-residue protein sequence, read N- to C-terminus: Lipoyl synthase, mitochondrial (379 aa).

[4Fe-4S] cluster-binding residues include Cys-94, Cys-99, Cys-105, Cys-126, Cys-130, Cys-133, and Ser-342. The Radical SAM core domain maps to 109-331; it reads GEDNGAATAT…EKEAMSMGFL (223 aa).

Belongs to the radical SAM superfamily. Lipoyl synthase family. [4Fe-4S] cluster serves as cofactor.

It localises to the mitochondrion. It catalyses the reaction [[Fe-S] cluster scaffold protein carrying a second [4Fe-4S](2+) cluster] + N(6)-octanoyl-L-lysyl-[protein] + 2 oxidized [2Fe-2S]-[ferredoxin] + 2 S-adenosyl-L-methionine + 4 H(+) = [[Fe-S] cluster scaffold protein] + N(6)-[(R)-dihydrolipoyl]-L-lysyl-[protein] + 4 Fe(3+) + 2 hydrogen sulfide + 2 5'-deoxyadenosine + 2 L-methionine + 2 reduced [2Fe-2S]-[ferredoxin]. It participates in protein modification; protein lipoylation via endogenous pathway; protein N(6)-(lipoyl)lysine from octanoyl-[acyl-carrier-protein]: step 2/2. Its function is as follows. Catalyzes the radical-mediated insertion of two sulfur atoms into the C-6 and C-8 positions of the octanoyl moiety bound to the lipoyl domains of lipoate-dependent enzymes, thereby converting the octanoylated domains into lipoylated derivatives. The chain is Lipoyl synthase, mitochondrial from Leishmania braziliensis.